The chain runs to 146 residues: Large ribosomal subunit protein uL15y (146 aa).

2 stretches are compositionally biased toward basic residues: residues 1-14 (MATA…KRGH) and 21-30 (RIGKHRKHPG). The tract at residues 1–38 (MATALKKNRKKRGHVSAGHGRIGKHRKHPGGRGNAGGM) is disordered.

The protein belongs to the universal ribosomal protein uL15 family.

The chain is Large ribosomal subunit protein uL15y (RPL27AB) from Arabidopsis thaliana (Mouse-ear cress).